The sequence spans 400 residues: CCA-adding enzyme (400 aa).

2 residues coordinate ATP: glycine 28 and arginine 31. CTP-binding residues include glycine 28 and arginine 31. Mg(2+) is bound by residues aspartate 41 and aspartate 43. ATP is bound by residues arginine 112, aspartate 155, arginine 158, arginine 161, and arginine 164. Residues arginine 112, aspartate 155, arginine 158, arginine 161, and arginine 164 each coordinate CTP.

This sequence belongs to the tRNA nucleotidyltransferase/poly(A) polymerase family. Bacterial CCA-adding enzyme type 3 subfamily. Homodimer. Mg(2+) is required as a cofactor.

It catalyses the reaction a tRNA precursor + 2 CTP + ATP = a tRNA with a 3' CCA end + 3 diphosphate. The enzyme catalyses a tRNA with a 3' CCA end + 2 CTP + ATP = a tRNA with a 3' CCACCA end + 3 diphosphate. Functionally, catalyzes the addition and repair of the essential 3'-terminal CCA sequence in tRNAs without using a nucleic acid template. Adds these three nucleotides in the order of C, C, and A to the tRNA nucleotide-73, using CTP and ATP as substrates and producing inorganic pyrophosphate. tRNA 3'-terminal CCA addition is required both for tRNA processing and repair. Also involved in tRNA surveillance by mediating tandem CCA addition to generate a CCACCA at the 3' terminus of unstable tRNAs. While stable tRNAs receive only 3'-terminal CCA, unstable tRNAs are marked with CCACCA and rapidly degraded. The sequence is that of CCA-adding enzyme from Staphylococcus aureus (strain bovine RF122 / ET3-1).